Consider the following 632-residue polypeptide: Transcription factor tazR (632 aa).

The segment at residues 20 to 47 (CNECRARKLRCDRVRPTCGTCESLGVTC) is a DNA-binding region (zn(2)-C6 fungal-type). The interval 77 to 130 (WNGQQKAAGGSPGESPPCSEGGQTLRAVSESTSDGVHDEDHANGARPPSSQSSI) is disordered.

The protein resides in the nucleus. Its function is as follows. Transcription factor that regulates the expression of the gene cluster that mediates the biosynthesis of azaterrilone A and other azaphilones, a class of fungal metabolites characterized by a highly oxygenated pyrano-quinone bicyclic core and exhibiting a broad range of bioactivities. The polypeptide is Transcription factor tazR (Aspergillus terreus (strain NIH 2624 / FGSC A1156)).